We begin with the raw amino-acid sequence, 1064 residues long: Lethal(2) giant larvae protein homolog 1 (1064 aa).

WD repeat units lie at residues 38–71, 78–119, 139–176, 200–234, 240–272, 290–332, 340–374, 396–474, 518–593, 602–663, 723–783, 792–844, 849–902, and 916–939; these read SALAFDPELRIMAIGTRSGAVKIYGAPGVEFTGL, VTQM…ALSF, VTVVLLVAASDIAALGTEGSSVFFLDVTTLTLLEGQTL, SLQGHLRDPTKILIGYSRGLLVIWNQASQCVDHIF, LESLCWGRDSSTVVSSHSDGSYAVWSVDAGSFP, AINK…ETLV, IIDFFTVHSTRPEDEFDDPQALAVLLEEELVVLDL, TCSA…YKLS, QKVA…RVLV, TAVT…LRQS, VRCL…KEVQ, AIAV…VSAK, LTAH…VHYS, and VFTRHGQGFYLISPSEFERFSLSA. Serine 663 is subject to Phosphoserine. Residue threonine 958 is modified to Phosphothreonine. Residues 966–1010 form a disordered region; the sequence is ESPKLSQANGTPSILLAPQSLDGSPDPAHSMGPDTPEPPEAALSP. Phosphoserine occurs at positions 967 and 985.

This sequence belongs to the WD repeat L(2)GL family. As to quaternary structure, associated with nonmuscle myosin II heavy chain. Interacts with PRKCI/aPKC, PARD6B/Par-6 and PARD6A. Interacts with STX4A. Interacts with RAB10 (GDP-bound form); the interaction is direct and promotes RAB10 association with membranes and activation through competition with the Rab inhibitor GDI1. Interacts with DCAF1. In terms of processing, phosphorylated at least at Ser-663 by PRKCI. Expressed in brain, kidney, and muscle but is barely seen in heart and placenta. Down-regulated or lost in all cell lines and in most of the tumor samples analyzed. Loss was associated with advanced stage of the disease.

The protein localises to the early endosome membrane. Its subcellular location is the golgi apparatus. It is found in the trans-Golgi network membrane. It localises to the golgi apparatus membrane. The protein resides in the cell projection. The protein localises to the axon. Its subcellular location is the cytoplasm. It is found in the cytoskeleton. Functionally, cortical cytoskeleton protein found in a complex involved in maintaining cell polarity and epithelial integrity. Involved in the regulation of mitotic spindle orientation, proliferation, differentiation and tissue organization of neuroepithelial cells. Involved in axonogenesis through RAB10 activation thereby regulating vesicular membrane trafficking toward the axonal plasma membrane. This chain is Lethal(2) giant larvae protein homolog 1 (LLGL1), found in Homo sapiens (Human).